We begin with the raw amino-acid sequence, 280 residues long: MDDDEFVFIESNPTQSTWVDVKKSQQQQQQQPQAPPQQQQQQILPVYRNLNPLVDENDGFTYQQQQLYLQQQQQFCQQQLLLEQQQQQQLLLKQQQQQLLLEQQQQQLLLKQQKQQLLLEQQLLLEQRQQQQQKVPIPIAQVPASTLVVESKQEEKIQEEQEVPVIVSIINSPPPPQEEEKPQLSKKEEPEWLKGKDKAPYISTSTSDVKYTSNVVSNKPYTTIKSSTSYSSVSGSGGSGIRRISLAELNGNSKPYTSSNATNKPFTTASKSTNSYSFSF.

Disordered regions lie at residues 20–41 (DVKK…QQQQ), 170–199 (INSP…KDKA), and 251–280 (GNSK…SFSF). Residues 25–41 (QQQQQQQPQAPPQQQQQ) are compositionally biased toward low complexity. A compositionally biased stretch (basic and acidic residues) spans 178 to 199 (EEEKPQLSKKEEPEWLKGKDKA).

This is an uncharacterized protein from Dictyostelium discoideum (Social amoeba).